Here is a 32-residue protein sequence, read N- to C-terminus: Peptide II.10.10 (32 aa).

3 disulfides stabilise this stretch: Cys5–Cys24, Cys10–Cys29, and Cys14–Cys31.

It belongs to the short scorpion toxin superfamily. Potassium channel inhibitor family. Alpha-KTx 10 subfamily. Expressed by the venom gland.

Its subcellular location is the secreted. The polypeptide is Peptide II.10.10 (Centruroides tecomanus (Scorpion)).